Consider the following 319-residue polypeptide: Cytochrome f (319 aa).

The first 35 residues, 1–35 (MQNKDACKSLSSWVSLSISLLVLTVPLIWPYNSTA), serve as a signal peptide directing secretion. Residues Phe-36, Cys-56, Cys-59, and His-60 each contribute to the heme site. The chain crosses the membrane as a helical span at residues 285–305 (IQGLLVFFASVILAQIFLVLK).

It belongs to the cytochrome f family. The 4 large subunits of the cytochrome b6-f complex are cytochrome b6, subunit IV (17 kDa polypeptide, petD), cytochrome f and the Rieske protein, while the 4 small subunits are PetG, PetL, PetM and PetN. The complex functions as a dimer. It depends on heme as a cofactor.

The protein resides in the plastid. The protein localises to the chloroplast thylakoid membrane. Its function is as follows. Component of the cytochrome b6-f complex, which mediates electron transfer between photosystem II (PSII) and photosystem I (PSI), cyclic electron flow around PSI, and state transitions. In Staurastrum punctulatum (Green alga), this protein is Cytochrome f.